Reading from the N-terminus, the 402-residue chain is Flavohemoprotein (402 aa).

The Globin domain maps to 1-136 (MLSEKTIEIV…IADAFISIEA (136 aa)). His85 is a heme b binding site. Catalysis depends on charge relay system residues Tyr95 and Glu135. The interval 147–402 (GGWKDFRNFV…EFFGPAASLQ (256 aa)) is reductase. The FAD-binding FR-type domain occupies 150–260 (KDFRNFVVVK…SAPAGDFVLN (111 aa)). FAD contacts are provided by residues Tyr188 and 204-207 (RQYS). 273–278 (GVGITP) lines the NADP(+) pocket. 394–397 (FFGP) provides a ligand contact to FAD.

Belongs to the globin family. Two-domain flavohemoproteins subfamily. This sequence in the C-terminal section; belongs to the flavoprotein pyridine nucleotide cytochrome reductase family. Heme b is required as a cofactor. FAD serves as cofactor.

It catalyses the reaction 2 nitric oxide + NADPH + 2 O2 = 2 nitrate + NADP(+) + H(+). The enzyme catalyses 2 nitric oxide + NADH + 2 O2 = 2 nitrate + NAD(+) + H(+). In terms of biological role, is involved in NO detoxification in an aerobic process, termed nitric oxide dioxygenase (NOD) reaction that utilizes O(2) and NAD(P)H to convert NO to nitrate, which protects the bacterium from various noxious nitrogen compounds. Therefore, plays a central role in the inducible response to nitrosative stress. The protein is Flavohemoprotein of Bacillus thuringiensis subsp. konkukian (strain 97-27).